The sequence spans 275 residues: Formamidopyrimidine-DNA glycosylase (275 aa).

P2 serves as the catalytic Schiff-base intermediate with DNA. E3 functions as the Proton donor in the catalytic mechanism. Catalysis depends on K58, which acts as the Proton donor; for beta-elimination activity. Residues H91, R109, and R154 each contribute to the DNA site. The segment at 240–274 (AVYERAGLPCRVCGTPIRRLVQGQRATYFCPSCQK) adopts an FPG-type zinc-finger fold. Catalysis depends on R264, which acts as the Proton donor; for delta-elimination activity.

The protein belongs to the FPG family. As to quaternary structure, monomer. It depends on Zn(2+) as a cofactor.

The enzyme catalyses Hydrolysis of DNA containing ring-opened 7-methylguanine residues, releasing 2,6-diamino-4-hydroxy-5-(N-methyl)formamidopyrimidine.. It carries out the reaction 2'-deoxyribonucleotide-(2'-deoxyribose 5'-phosphate)-2'-deoxyribonucleotide-DNA = a 3'-end 2'-deoxyribonucleotide-(2,3-dehydro-2,3-deoxyribose 5'-phosphate)-DNA + a 5'-end 5'-phospho-2'-deoxyribonucleoside-DNA + H(+). In terms of biological role, involved in base excision repair of DNA damaged by oxidation or by mutagenic agents. Acts as a DNA glycosylase that recognizes and removes damaged bases. Has a preference for oxidized purines, such as 7,8-dihydro-8-oxoguanine (8-oxoG). Has AP (apurinic/apyrimidinic) lyase activity and introduces nicks in the DNA strand. Cleaves the DNA backbone by beta-delta elimination to generate a single-strand break at the site of the removed base with both 3'- and 5'-phosphates. The polypeptide is Formamidopyrimidine-DNA glycosylase (Bordetella pertussis (strain Tohama I / ATCC BAA-589 / NCTC 13251)).